The following is a 751-amino-acid chain: C2 domain-containing protein At1g53590 (751 aa).

The next 2 membrane-spanning stretches (helical) occupy residues 2-22 (ESSL…ISSL) and 26-46 (HAFF…RYVM). The 195-residue stretch at 68 to 262 (DSESVRWMNY…QPNMLVVDME (195 aa)) folds into the SMP-LTD domain. The 115-residue stretch at 267–381 (PTSENWFFVD…RGGQRNDMWL (115 aa)) folds into the C2 domain. Positions 298, 304, 352, 354, and 359 each coordinate Ca(2+). Disordered regions lie at residues 469–519 (QIWE…GRGL) and 572–751 (SGPL…SSSK). Basic and acidic residues predominate over residues 472 to 482 (EPRKGKSRRLD). The span at 483 to 502 (SQIQRTPNDESLSNGSSSTD) shows a compositional bias: polar residues. Over residues 590–611 (NSGKGHMKDVAKSFLKQAEKSA) the composition is skewed to basic and acidic residues. Basic residues predominate over residues 612–624 (KQIKHAFSRKGSM). The segment covering 625–634 (KPRDGHKEIV) has biased composition (basic and acidic residues). Positions 639 to 651 (SGTDSESSDDDDA) are enriched in acidic residues. Basic and acidic residues-rich tracts occupy residues 664 to 681 (KLTR…DHVD) and 703 to 751 (VEAK…SSSK). Positions 701 to 728 (TDVEAKEEKLKEAAESETRDMDTAMNIK) form a coiled coil.

This sequence belongs to the extended synaptotagmin family. It depends on Ca(2+) as a cofactor.

The protein localises to the membrane. This chain is C2 domain-containing protein At1g53590 (NTMC2T6.1), found in Arabidopsis thaliana (Mouse-ear cress).